Here is a 376-residue protein sequence, read N- to C-terminus: Eugenol O-methyltransferase (376 aa).

4 residues coordinate S-adenosyl-L-methionine: Gly219, Asp242, Met263, and Lys276. The active-site Proton acceptor is the His280.

It belongs to the class I-like SAM-binding methyltransferase superfamily. Cation-independent O-methyltransferase family. COMT subfamily. Homodimer. As to expression, expressed predominantly in root hairs.

The catalysed reaction is (E)-isoeugenol + S-adenosyl-L-methionine = (E)-isomethyleugenol + S-adenosyl-L-homocysteine + H(+). Functionally, O-methyltransferase. Substrate preference is eugenol &gt;&gt; orcinol monomethyl ether &gt; resorcinol monomethyl ether. The protein is Eugenol O-methyltransferase (EOMT) of Sorghum bicolor (Sorghum).